A 478-amino-acid chain; its full sequence is Aspartyl/glutamyl-tRNA(Asn/Gln) amidotransferase subunit B (478 aa).

This sequence belongs to the GatB/GatE family. GatB subfamily. Heterotrimer of A, B and C subunits.

The catalysed reaction is L-glutamyl-tRNA(Gln) + L-glutamine + ATP + H2O = L-glutaminyl-tRNA(Gln) + L-glutamate + ADP + phosphate + H(+). The enzyme catalyses L-aspartyl-tRNA(Asn) + L-glutamine + ATP + H2O = L-asparaginyl-tRNA(Asn) + L-glutamate + ADP + phosphate + 2 H(+). In terms of biological role, allows the formation of correctly charged Asn-tRNA(Asn) or Gln-tRNA(Gln) through the transamidation of misacylated Asp-tRNA(Asn) or Glu-tRNA(Gln) in organisms which lack either or both of asparaginyl-tRNA or glutaminyl-tRNA synthetases. The reaction takes place in the presence of glutamine and ATP through an activated phospho-Asp-tRNA(Asn) or phospho-Glu-tRNA(Gln). This chain is Aspartyl/glutamyl-tRNA(Asn/Gln) amidotransferase subunit B, found in Brevibacillus brevis (strain 47 / JCM 6285 / NBRC 100599).